The primary structure comprises 455 residues: Immunoglobulin alpha-2 heavy chain (455 aa).

Ig-like domains are found at residues 1–95 (EVQL…VYYC), 121–213 (PKVF…QDVT), 227–322 (PRLS…ANIT), and 330–432 (PEVH…KTID). The variable (V) domain, involved in antigen recognition stretch occupies residues 1–115 (EVQLVETGGG…GKGTTVTVSS (115 aa)). 2 cysteine pairs are disulfide-bonded: cysteine 22/cysteine 95 and cysteine 141/cysteine 200. The interval 116–455 (ASPTSPKVFP…VMAEADGTCY (340 aa)) is constant (C) domain. N-linked (GlcNAc...) asparagine glycans are attached at residues asparagine 162, asparagine 207, and asparagine 246. 2 disulfides stabilise this stretch: cysteine 225–cysteine 282 and cysteine 249–cysteine 306. N-linked (GlcNAc...) asparagine glycosylation occurs at asparagine 320. Residues cysteine 352 and cysteine 415 are joined by a disulfide bond. Asparagine 442 carries N-linked (GlcNAc...) asparagine glycosylation.

Immunoglobulins are composed of two identical heavy chains and two identical light chains; disulfide-linked. Monomeric or polymeric.

The protein resides in the secreted. The protein localises to the cell membrane. In terms of biological role, immunoglobulins, also known as antibodies, are membrane-bound or secreted glycoproteins produced by B lymphocytes. In the recognition phase of humoral immunity, the membrane-bound immunoglobulins serve as receptors which, upon binding of a specific antigen, trigger the clonal expansion and differentiation of B lymphocytes into immunoglobulins-secreting plasma cells. Secreted immunoglobulins mediate the effector phase of humoral immunity, which results in the elimination of bound antigens. The antigen binding site is formed by the variable domain of one heavy chain, together with that of its associated light chain. Thus, each immunoglobulin has two antigen binding sites with remarkable affinity for a particular antigen. The variable domains are assembled by a process called V-(D)-J rearrangement and can then be subjected to somatic hypermutations which, after exposure to antigen and selection, allow affinity maturation for a particular antigen. Ig alpha is the major immunoglobulin class in body secretions. In Homo sapiens (Human), this protein is Immunoglobulin alpha-2 heavy chain.